The chain runs to 99 residues: Large ribosomal subunit protein eL21 (99 aa).

It belongs to the eukaryotic ribosomal protein eL21 family.

In Ignicoccus hospitalis (strain KIN4/I / DSM 18386 / JCM 14125), this protein is Large ribosomal subunit protein eL21.